Reading from the N-terminus, the 158-residue chain is Low molecular weight phosphotyrosine protein phosphatase (158 aa).

Ala2 carries the post-translational modification N-acetylalanine. Cys13 functions as the Nucleophile in the catalytic mechanism. The active site involves Arg19. The active-site Proton donor is Asp130. A phosphotyrosine mark is found at Tyr132 and Tyr133.

This sequence belongs to the low molecular weight phosphotyrosine protein phosphatase family. In terms of assembly, interacts with EPHA2; dephosphorylates EPHA2. Interacts with EPHB1. Interacts with the SH3 domain of SPTAN1. In terms of processing, phosphorylated by LCK. Phosphorylation at Tyr-132 increases its phosphatase activity.

The protein localises to the cytoplasm. The enzyme catalyses O-phospho-L-tyrosyl-[protein] + H2O = L-tyrosyl-[protein] + phosphate. The catalysed reaction is a phosphate monoester + H2O = an alcohol + phosphate. With respect to regulation, inhibited by sulfhydryl reagents. Acts on tyrosine phosphorylated proteins, low-MW aryl phosphates and natural and synthetic acyl phosphates with differences in substrate specificity between isoform 1 and isoform 2. This chain is Low molecular weight phosphotyrosine protein phosphatase (ACP1), found in Pongo abelii (Sumatran orangutan).